A 507-amino-acid chain; its full sequence is Glutamyl-tRNA(Gln) amidotransferase subunit A, mitochondrial (507 aa).

Active-site charge relay system residues include lysine 79 and serine 160. Residue serine 184 is the Acyl-ester intermediate of the active site.

It belongs to the amidase family. GatA subfamily. Subunit of the heterotrimeric GatCAB amidotransferase (AdT) complex, composed of A, B and C subunits.

It localises to the mitochondrion. It carries out the reaction L-glutamyl-tRNA(Gln) + L-glutamine + ATP + H2O = L-glutaminyl-tRNA(Gln) + L-glutamate + ADP + phosphate + H(+). Functionally, allows the formation of correctly charged Gln-tRNA(Gln) through the transamidation of misacylated Glu-tRNA(Gln) in the mitochondria. The reaction takes place in the presence of glutamine and ATP through an activated gamma-phospho-Glu-tRNA(Gln). This Drosophila pseudoobscura pseudoobscura (Fruit fly) protein is Glutamyl-tRNA(Gln) amidotransferase subunit A, mitochondrial.